Here is a 255-residue protein sequence, read N- to C-terminus: PHD finger protein ALFIN-LIKE 4 (255 aa).

Met1 is subject to N-acetylmethionine. Positions 145-200 are disordered; that stretch reads GKDKSSVSNNSSNRSKSSSKRGSESRAKFSKPEPKDDEEEEEEGVEEEDEDEQGET. Over residues 150–160 the composition is skewed to low complexity; sequence SVSNNSSNRSK. The span at 165-178 shows a compositional bias: basic and acidic residues; that stretch reads RGSESRAKFSKPEP. Acidic residues predominate over residues 179-198; sequence KDDEEEEEEGVEEEDEDEQG. The PHD-type zinc finger occupies 199–251; that stretch reads ETQCGACGESYAADEFWICCDLCEMWFHGKCVKITPARAEHIKQYKCPSCSNK.

It belongs to the Alfin family. In terms of assembly, interacts with H3K4me3 and to a lesser extent with H3K4me2. In terms of tissue distribution, ubiquitously expressed.

Its subcellular location is the nucleus. Its function is as follows. Histone-binding component that specifically recognizes H3 tails trimethylated on 'Lys-4' (H3K4me3), which mark transcription start sites of virtually all active genes. This is PHD finger protein ALFIN-LIKE 4 (AL4) from Arabidopsis thaliana (Mouse-ear cress).